A 134-amino-acid polypeptide reads, in one-letter code: Large ribosomal subunit protein uL16c (134 aa).

It belongs to the universal ribosomal protein uL16 family. Part of the 50S ribosomal subunit.

It localises to the plastid. The protein localises to the chloroplast. This is Large ribosomal subunit protein uL16c from Pinus koraiensis (Korean pine).